Reading from the N-terminus, the 328-residue chain is WUSCHEL-related homeobox 6 (328 aa).

Over residues 1 to 11 the composition is skewed to polar residues; sequence MEGSSNSPDRQ. Residues 1-45 are disordered; it reads MEGSSNSPDRQSSGGSPPEERGGGGSGGGGGRSAAGEPVRSRWTP. The segment covering 23 to 33 has biased composition (gly residues); that stretch reads GGGSGGGGGRS. The homeobox; WUS-type DNA-binding region spans 38–102; that stretch reads PVRSRWTPKP…NRRSRSRRRQ (65 aa).

This sequence belongs to the WUS homeobox family.

The protein resides in the nucleus. Transcription factor which may be involved in developmental processes. The protein is WUSCHEL-related homeobox 6 (WOX6) of Oryza sativa subsp. indica (Rice).